The following is a 601-amino-acid chain: Glutathione-regulated potassium-efflux system protein KefB (601 aa).

Transmembrane regions (helical) follow at residues Ser-4–Ala-24, Ile-29–Phe-49, Glu-55–Leu-75, Ile-87–Met-107, Ala-115–Met-135, Val-152–Gly-172, His-177–Gly-197, Phe-207–Gly-227, Leu-230–Leu-250, Gly-268–Tyr-288, Leu-291–Leu-311, Met-324–Ala-344, and Ala-356–Val-376. The 120-residue stretch at Lys-400–Thr-519 folds into the RCK N-terminal domain.

The protein belongs to the monovalent cation:proton antiporter 2 (CPA2) transporter (TC 2.A.37) family. KefB subfamily. In terms of assembly, interacts with the regulatory subunit KefG.

It localises to the cell inner membrane. Its activity is regulated as follows. Activated by adducts between glutathione and electrophiles. Pore-forming subunit of a potassium efflux system that confers protection against electrophiles. Catalyzes K(+)/H(+) antiport. The polypeptide is Glutathione-regulated potassium-efflux system protein KefB (Escherichia coli (strain K12)).